We begin with the raw amino-acid sequence, 505 residues long: Oxidative stress-induced growth inhibitor 2 (505 aa).

It belongs to the OKL38 family. NADPH is required as a cofactor. As to expression, ubiquitous. Expressed at higher levels in testis and ovary.

Its subcellular location is the midbody. Functionally, monooxygenase catalytic activity. May be involved in meiosis or the maturation of germ cells. This Homo sapiens (Human) protein is Oxidative stress-induced growth inhibitor 2.